The sequence spans 212 residues: MPRSVPVMTDVIQVTKRESTGTAATRRLRRDGHVPAVLYGHGEANEHLAVPSAQVKGLLRHHSKTVQLSGDVDETALVSDMQWDPLGIEVLHMDLIRVNLKEKVELGVPIVLHGEAVGVREGGMLLENVHEVEIRCSAGSIPDNLVLEVSELGVGEHKTAGDLTLPEGVELITDVDVVIAHIEAQRDEEIAEAGDALAEPEVISKGSGEADE.

The disordered stretch occupies residues Ile190 to Glu212.

It belongs to the bacterial ribosomal protein bL25 family. CTC subfamily. In terms of assembly, part of the 50S ribosomal subunit; part of the 5S rRNA/L5/L18/L25 subcomplex. Contacts the 5S rRNA. Binds to the 5S rRNA independently of L5 and L18.

This is one of the proteins that binds to the 5S RNA in the ribosome where it forms part of the central protuberance. The chain is Large ribosomal subunit protein bL25 from Rhodopirellula baltica (strain DSM 10527 / NCIMB 13988 / SH1).